Here is a 602-residue protein sequence, read N- to C-terminus: Zinc finger MYND domain-containing protein 11 (602 aa).

The region spanning Lys6–Gln82 is the SAMD1-like winged helix (WH) domain. A PHD-type zinc finger spans residues Asp100 to Ile148. The 107-residue stretch at Lys149–Leu255 folds into the Bromo domain. Residues Cys258, Cys261, Cys277, and His281 each coordinate Zn(2+). In terms of domain architecture, PWWP spans Asn280–Asn331. Lys366 is covalently cross-linked (Glycyl lysine isopeptide (Lys-Gly) (interchain with G-Cter in SUMO2)). The tract at residues Lys366–Asn459 is disordered. The Nuclear localization signal signature appears at Arg394–Arg400. Residues Lys407 and Lys408 each participate in a glycyl lysine isopeptide (Lys-Gly) (interchain with G-Cter in SUMO2) cross-link. The residue at position 421 (Ser421) is a Phosphoserine. The span at Ser435–Asn459 shows a compositional bias: polar residues. The tract at residues His452–Tyr572 is interaction with human adenovirus E1A. Residues Cys563, Cys566, Cys574, Cys575, Cys581, Cys585, His594, and Cys598 each coordinate Zn(2+). The MYND-type zinc-finger motif lies at Cys563–Cys598.

In terms of assembly, homooligomer; forms homooligomers via its C-terminus. Interacts with histone H3.3 trimethylated at 'Lys-36' (H3.3K36me3). Interacts (via MYND-type zinc finger) with NCOR1. Interacts (via MYND-type zinc finger) with MGA protein (via PXLXP motif). Interacts (via MYND-type zinc finger) with EZH2. Interacts with EMSY and E2F6. Interacts with PIAS1 and UBE2I. As to quaternary structure, (Microbial infection) Interacts (via MYND-type zinc finger) with human adenovirus early E1A protein (via PXLXP motif); this interaction inhibits E1A mediated transactivation. (Microbial infection) Interacts (via MYND-type zinc finger) with Epstein-Barr virus EBNA2 protein (via PXLXP motif). Interacts with Epstein-Barr virus-derived protein LMP1; leading to negatively regulate NF-kappa-B activation by Epstein-Barr virus-derived protein LMP1. Sumoylated following its interaction with PIAS1 and UBE2I. In terms of processing, ubiquitinated, leading to proteasomal degradation. Ubiquitous.

The protein resides in the nucleus. It localises to the chromosome. Chromatin reader that specifically recognizes and binds histone H3.3 trimethylated at 'Lys-36' (H3.3K36me3) and regulates RNA polymerase II elongation. Does not bind other histone H3 subtypes (H3.1 or H3.2). Colocalizes with highly expressed genes and functions as a transcription corepressor by modulating RNA polymerase II at the elongation stage. Binds non-specifically to dsDNA. Acts as a tumor-suppressor by repressing a transcriptional program essential for tumor cell growth. In terms of biological role, (Microbial infection) Inhibits Epstein-Barr virus EBNA2-mediated transcriptional activation and host cell proliferation, through direct interaction. This Homo sapiens (Human) protein is Zinc finger MYND domain-containing protein 11.